The chain runs to 193 residues: Large ribosomal subunit protein uL5 (193 aa).

Belongs to the universal ribosomal protein uL5 family. In terms of assembly, part of the 50S ribosomal subunit; part of the 5S rRNA/L5/L18/L25 subcomplex. Contacts the 5S rRNA and the P site tRNA. Forms a bridge to the 30S subunit in the 70S ribosome.

Its function is as follows. This is one of the proteins that bind and probably mediate the attachment of the 5S RNA into the large ribosomal subunit, where it forms part of the central protuberance. In the 70S ribosome it contacts protein S13 of the 30S subunit (bridge B1b), connecting the 2 subunits; this bridge is implicated in subunit movement. Contacts the P site tRNA; the 5S rRNA and some of its associated proteins might help stabilize positioning of ribosome-bound tRNAs. This is Large ribosomal subunit protein uL5 from Pseudarthrobacter chlorophenolicus (strain ATCC 700700 / DSM 12829 / CIP 107037 / JCM 12360 / KCTC 9906 / NCIMB 13794 / A6) (Arthrobacter chlorophenolicus).